Here is a 374-residue protein sequence, read N- to C-terminus: tRNA N6-adenosine threonylcarbamoyltransferase (374 aa).

The Fe cation site is built by His-117 and His-121. Substrate-binding positions include 140-144 (LVSGG), Asp-174, Gly-187, Asp-191, and Asn-283. Position 311 (Asp-311) interacts with Fe cation. Over residues 337 to 352 (ADSSLPVTEPHVPGQG) the composition is skewed to low complexity. A disordered region spans residues 337–374 (ADSSLPVTEPHVPGQGHPHGHPHGHDHVHEVSKENLYS). Basic and acidic residues predominate over residues 359-374 (HGHDHVHEVSKENLYS).

The protein belongs to the KAE1 / TsaD family. It depends on Fe(2+) as a cofactor.

The protein localises to the cytoplasm. It carries out the reaction L-threonylcarbamoyladenylate + adenosine(37) in tRNA = N(6)-L-threonylcarbamoyladenosine(37) in tRNA + AMP + H(+). In terms of biological role, required for the formation of a threonylcarbamoyl group on adenosine at position 37 (t(6)A37) in tRNAs that read codons beginning with adenine. Is involved in the transfer of the threonylcarbamoyl moiety of threonylcarbamoyl-AMP (TC-AMP) to the N6 group of A37, together with TsaE and TsaB. TsaD likely plays a direct catalytic role in this reaction. The sequence is that of tRNA N6-adenosine threonylcarbamoyltransferase from Streptomyces coelicolor (strain ATCC BAA-471 / A3(2) / M145).